The sequence spans 544 residues: Ell-associated factor Eaf (544 aa).

The interval 147-544 is disordered; it reads QSVPMNMGHQ…LSSNSSDDDD (398 aa). The segment covering 193 to 202 has biased composition (basic and acidic residues); it reads SSKDKVDFKP. S205 carries the post-translational modification Phosphoserine. Over residues 264 to 273 the composition is skewed to low complexity; that stretch reads SGSSTGSSSG. Basic residues predominate over residues 287 to 299; the sequence is GKQRQAHGKRQQI. 3 stretches are compositionally biased toward low complexity: residues 305 to 319, 333 to 374, and 396 to 407; these read PPVQQQPHYQQQQQP, QPHP…QQRP, and ASQSVAQAAAVL. The span at 425–440 shows a compositional bias: acidic residues; it reads DSSDSDSGSDSDDSTE. Low complexity-rich tracts occupy residues 450 to 483, 503 to 513, and 526 to 544; these read EQQQQQQLQHQQIQQPAPHHQRHQQQQSQQHMNQ, QQPQPQPQQQQ, and NDLLQNDLQLSSNSSDDDD.

Belongs to the EAF family.

The protein resides in the nucleus. In terms of biological role, promotes transcriptional elongation by Su(Tpl)/ELL. Essential for development. This Drosophila persimilis (Fruit fly) protein is Ell-associated factor Eaf.